The chain runs to 713 residues: MAKSPENSTLEEILGQYQRSLREHASRSIHQLTCALKEGDVTIGEDAPNLSFSTSVGNEDARTAWPELQQSHAVNQLKDLLRQQADKESEVSPSRRRKMSPLRSLEHEETNMPTMHDLVHTINDQSQYIHHLEAEVKFCKEELSGMKNKIQVVVLENEGLQQQLKSQRQEETLREQTLLDASGNMHNSWITTGEDSGVGETSKRPFSHDNADFGKAASAGEQLELEKLKLTYEEKCEIEESQLKFLRNDLAEYQRTCEDLKEQLKHKEFLLAANTCNRVGGLCLKCAQHEAVLSQTHTNVHMQTIERLVKERDDLMSALVSVRSSLADTQQREASAYEQVKQVLQISEEANFEKTKALIQCDQLRKELERQAERLEKELASQQEKRAIEKDMMKKEITKEREYMGSKMLILSQNIAQLEAQVEKVTKEKISAINQLEEIQSQLASREMDVTKVCGEMRYQLNKTNMEKDEAEKEHREFRAKTNRDLEIKDQEIEKLRIELDESKQHLEQEQQKAALAREECLRLTELLGESEHQLHLTRQEKDSIQQSFSKEAKAQALQAQQREQELTQKIQQMEAQHDKTENEQYLLLTSQNTFLTKLKEECCTLAKKLEQISQKTRSEIAQLSQEKRYTYDKLGKLQRRNEELEEQCVQHGRVHETMKQRLRQLDKHSQATAQQLVQLLSKQNQLLLERQSLSEEVDRLRTQLPSMPQSDC.

A phosphoserine mark is found at Ser-4 and Ser-28. The disordered stretch occupies residues 84-103; sequence QADKESEVSPSRRRKMSPLR. Positions 129 to 175 form a coiled coil; that stretch reads IHHLEAEVKFCKEELSGMKNKIQVVVLENEGLQQQLKSQRQEETLRE. The disordered stretch occupies residues 194–215; that stretch reads EDSGVGETSKRPFSHDNADFGK. Positions 201–212 are enriched in basic and acidic residues; it reads TSKRPFSHDNAD. The interval 216–713 is sufficient for homodimerization; it reads AASAGEQLEL…QLPSMPQSDC (498 aa). 2 coiled-coil regions span residues 223–273 and 348–707; these read LELE…LLAA and EEAN…QLPS. The mediates interaction with OFD1 stretch occupies residues 533 to 713; that stretch reads HQLHLTRQEK…QLPSMPQSDC (181 aa).

Homodimer. Interacts with OFD1; the interaction is direct. Interacts with FAM161A. Interacts with RABEP2, ERC1 and CEP131. In terms of tissue distribution, expressed in thymus, prostate, testis, ovary, small intestine, colon, mucosa, colon and renal cancer tumors.

It localises to the cytoplasm. The protein localises to the cytoskeleton. Its subcellular location is the microtubule organizing center. It is found in the centrosome. The protein resides in the centriole. It localises to the cilium basal body. The protein localises to the cell junction. Its function is as follows. Plays a role in the establishment of cell polarity and epithelial lumen formation. Also plays an essential role in ciliogenesis and subsequent Hedgehog signaling pathway that requires the presence of intact primary cilia for pathway activation. Mechanistically, interacts with and mediates RABEP2 centrosomal localization which is critical for ciliogenesis. The polypeptide is Serologically defined colon cancer antigen 8 (SDCCAG8) (Homo sapiens (Human)).